The sequence spans 236 residues: Ribose-5-phosphate isomerase A (236 aa).

Substrate-binding positions include 33-36, 90-93, and 103-106; these read TGST, DGAD, and KGGG. Residue E112 is the Proton acceptor of the active site. K130 lines the substrate pocket.

Belongs to the ribose 5-phosphate isomerase family. In terms of assembly, homodimer.

The catalysed reaction is aldehydo-D-ribose 5-phosphate = D-ribulose 5-phosphate. It functions in the pathway carbohydrate degradation; pentose phosphate pathway; D-ribose 5-phosphate from D-ribulose 5-phosphate (non-oxidative stage): step 1/1. Catalyzes the reversible conversion of ribose-5-phosphate to ribulose 5-phosphate. The chain is Ribose-5-phosphate isomerase A from Nostoc sp. (strain PCC 7120 / SAG 25.82 / UTEX 2576).